The following is a 378-amino-acid chain: Probable endopolygalacturonase E (378 aa).

The first 19 residues, 1–19, serve as a signal peptide directing secretion; the sequence is MVTSSSVIVLTLWAALVSA. Positions 20 to 38 are excised as a propeptide; it reads SPVADPLVTPAPKLEDLEK. A disulfide bridge links Cys43 with Cys61. PbH1 repeat units lie at residues 103–125, 174–204, and 205–226; these read GPLVSVSGTDITVTGADGAYLNG, STYLTMEDITIDNTDGDDGEAANTDGFDIGD, and STYITITGANVYNQDDCVAVNS. Asp219 acts as the Proton donor in catalysis. An intrachain disulfide couples Cys221 to Cys237. His241 is a catalytic residue. 3 PbH1 repeats span residues 256 to 277, 285 to 307, and 317 to 345; these read VKNVTFYDSEIKSSQNGVRIKT, VSEVTYKEITLSDITDYGIVVEQ, and TDGITIEDFVLDNVQGSVESSGTNIYIVC. Residue Asn258 is glycosylated (N-linked (GlcNAc...) asparagine). Intrachain disulfides connect Cys345-Cys350 and Cys369-Cys378.

This sequence belongs to the glycosyl hydrolase 28 family.

The protein resides in the secreted. It carries out the reaction (1,4-alpha-D-galacturonosyl)n+m + H2O = (1,4-alpha-D-galacturonosyl)n + (1,4-alpha-D-galacturonosyl)m.. Involved in maceration and soft-rotting of plant tissue. Hydrolyzes the 1,4-alpha glycosidic bonds of de-esterified pectate in the smooth region of the plant cell wall. This Aspergillus niger (strain ATCC MYA-4892 / CBS 513.88 / FGSC A1513) protein is Probable endopolygalacturonase E (pgaE).